The following is a 359-amino-acid chain: 3-dehydroquinate synthase (359 aa).

NAD(+) contacts are provided by residues 69–74 (DAETGK), 103–107 (GAATD), 127–128 (TT), Lys140, and Lys149. Glu182, His244, and His260 together coordinate Zn(2+).

Belongs to the sugar phosphate cyclases superfamily. Dehydroquinate synthase family. Co(2+) serves as cofactor. Requires Zn(2+) as cofactor. The cofactor is NAD(+).

The protein localises to the cytoplasm. The catalysed reaction is 7-phospho-2-dehydro-3-deoxy-D-arabino-heptonate = 3-dehydroquinate + phosphate. The protein operates within metabolic intermediate biosynthesis; chorismate biosynthesis; chorismate from D-erythrose 4-phosphate and phosphoenolpyruvate: step 2/7. Its function is as follows. Catalyzes the conversion of 3-deoxy-D-arabino-heptulosonate 7-phosphate (DAHP) to dehydroquinate (DHQ). In Corynebacterium diphtheriae (strain ATCC 700971 / NCTC 13129 / Biotype gravis), this protein is 3-dehydroquinate synthase.